The following is a 158-amino-acid chain: 2-C-methyl-D-erythritol 2,4-cyclodiphosphate synthase (158 aa).

The a divalent metal cation site is built by aspartate 9 and histidine 11. 4-CDP-2-C-methyl-D-erythritol 2-phosphate contacts are provided by residues 9–11 (DVH) and 35–36 (HS). Position 43 (histidine 43) interacts with a divalent metal cation. 4-CDP-2-C-methyl-D-erythritol 2-phosphate contacts are provided by residues 57–59 (DIG), 62–66 (FPDTD), 133–136 (TTTE), phenylalanine 140, and arginine 143.

This sequence belongs to the IspF family. Homotrimer. It depends on a divalent metal cation as a cofactor.

It carries out the reaction 4-CDP-2-C-methyl-D-erythritol 2-phosphate = 2-C-methyl-D-erythritol 2,4-cyclic diphosphate + CMP. Its pathway is isoprenoid biosynthesis; isopentenyl diphosphate biosynthesis via DXP pathway; isopentenyl diphosphate from 1-deoxy-D-xylulose 5-phosphate: step 4/6. In terms of biological role, involved in the biosynthesis of isopentenyl diphosphate (IPP) and dimethylallyl diphosphate (DMAPP), two major building blocks of isoprenoid compounds. Catalyzes the conversion of 4-diphosphocytidyl-2-C-methyl-D-erythritol 2-phosphate (CDP-ME2P) to 2-C-methyl-D-erythritol 2,4-cyclodiphosphate (ME-CPP) with a corresponding release of cytidine 5-monophosphate (CMP). This Haemophilus influenzae (strain 86-028NP) protein is 2-C-methyl-D-erythritol 2,4-cyclodiphosphate synthase.